The chain runs to 297 residues: NAD(P)-dependent methylenetetrahydromethanopterin dehydrogenase (297 aa).

To M.extorquens MtdA. As to quaternary structure, homohexamer.

It localises to the cytoplasm. The enzyme catalyses 5,10-methylenetetrahydromethanopterin + NAD(+) = 5,10-methenyl-5,6,7,8-tetrahydromethanopterin + NADH. It carries out the reaction 5,10-methylenetetrahydromethanopterin + NADP(+) = 5,10-methenyl-5,6,7,8-tetrahydromethanopterin + NADPH. It functions in the pathway one-carbon metabolism; formaldehyde degradation; formate from formaldehyde (H(4)MPT route): step 2/5. In terms of biological role, catalyzes the dehydrogenation of methylene-H(4)MPT. This is NAD(P)-dependent methylenetetrahydromethanopterin dehydrogenase (mtdB) from Methylorubrum extorquens (strain ATCC 14718 / DSM 1338 / JCM 2805 / NCIMB 9133 / AM1) (Methylobacterium extorquens).